Consider the following 964-residue polypeptide: Probable outer membrane protein PmpE (964 aa).

Residues 1-18 (MKKAFFFFLIGNSLSGLA) form the signal peptide. The Autotransporter domain maps to 683–964 (LTPSGHPFWG…YLNGEIALRF (282 aa)).

The protein belongs to the PMP outer membrane protein family.

Its subcellular location is the secreted. It is found in the cell wall. The protein resides in the cell outer membrane. In Chlamydia trachomatis serovar D (strain ATCC VR-885 / DSM 19411 / UW-3/Cx), this protein is Probable outer membrane protein PmpE (pmpE).